Consider the following 823-residue polypeptide: Putative ankyrin repeat domain-containing protein 20A3 (823 aa).

5 ANK repeats span residues 66–95 (QHRTALHLACASGHVQVVTLLVNRKCQIDV), 99–128 (ENRTPLIQAVHCQEEACAVILLEHGANPNL), 132–161 (YGNTALHYAVYSESTSLAEKLLSHGAHIEA), 165–194 (DNNTPLLFAIICKKEKMVEFLLKRKASSHA), and 198–227 (LRRSALMLAVYYDSPGIVNILLKQNIDVFA). Disordered stretches follow at residues 301–343 (VPEK…EVED) and 355–402 (VQTL…LSEN). Over residues 372–384 (QERHERSEKKQPQ) the composition is skewed to basic and acidic residues. 3 coiled-coil regions span residues 431–480 (KKLK…KQLE), 571–724 (AFRY…NNST), and 776–805 (LVLEEKSKKLMNECDHLKESLFQYEREKTE).

The sequence is that of Putative ankyrin repeat domain-containing protein 20A3 from Homo sapiens (Human).